A 126-amino-acid polypeptide reads, in one-letter code: Glycine cleavage system H protein (126 aa).

The Lipoyl-binding domain maps to 21–103; sequence TVTVGISDHA…YESGWIARIK (83 aa). At lysine 62 the chain carries N6-lipoyllysine.

Belongs to the GcvH family. The glycine cleavage system is composed of four proteins: P, T, L and H. (R)-lipoate serves as cofactor.

In terms of biological role, the glycine cleavage system catalyzes the degradation of glycine. The H protein shuttles the methylamine group of glycine from the P protein to the T protein. This Aliivibrio fischeri (strain ATCC 700601 / ES114) (Vibrio fischeri) protein is Glycine cleavage system H protein.